The following is a 216-amino-acid chain: Adenylate kinase (216 aa).

10–15 (GAGKGT) is a binding site for ATP. Positions 30 to 59 (STGDMLRAAVKAETPVGLKAKAVMEAGQLV) are NMP. AMP contacts are provided by residues Thr-31, Arg-36, 57–59 (QLV), 85–88 (GYPR), and Gln-92. An LID region spans residues 126-164 (GRYTCATCGKGYHDKFEKPAVEGTCDKCGGHEFKRRPDD). Arg-127 provides a ligand contact to ATP. 4 residues coordinate Zn(2+): Cys-130, Cys-133, Cys-150, and Cys-153. 2 residues coordinate AMP: Arg-161 and Arg-172. Ala-200 lines the ATP pocket.

Belongs to the adenylate kinase family. As to quaternary structure, monomer.

It localises to the cytoplasm. It catalyses the reaction AMP + ATP = 2 ADP. The protein operates within purine metabolism; AMP biosynthesis via salvage pathway; AMP from ADP: step 1/1. Functionally, catalyzes the reversible transfer of the terminal phosphate group between ATP and AMP. Plays an important role in cellular energy homeostasis and in adenine nucleotide metabolism. In Novosphingobium aromaticivorans (strain ATCC 700278 / DSM 12444 / CCUG 56034 / CIP 105152 / NBRC 16084 / F199), this protein is Adenylate kinase.